The sequence spans 418 residues: Tektin-1 (418 aa).

4 coiled-coil regions span residues 20–107, 134–177, 266–308, and 332–383; these read NKSQ…SYKE, QELQ…DLKD, NGLK…QQEG, and VAQY…ENTI.

The protein belongs to the tektin family. As to quaternary structure, microtubule inner protein component of sperm flagellar doublet microtubules. Post-translationally, ubiquitinated, leading to its degradation. Deubiquitinated by USP16, promoting its stability. As to expression, predominantly expressed in testis.

The protein resides in the cytoplasm. Its subcellular location is the cytoskeleton. It localises to the cilium axoneme. It is found in the flagellum axoneme. In terms of biological role, microtubule inner protein (MIP) part of the dynein-decorated doublet microtubules (DMTs) in cilia and flagellar axoneme. Forms filamentous polymers in the walls of ciliary and flagellar microtubules. This is Tektin-1 (Tekt1) from Rattus norvegicus (Rat).